The sequence spans 247 residues: MNILLCSINTQKGLYDISGVEVGQHLYWQIGGFQVHAQVLITSWVVIAILLGSAIIAVRNPQTIPTDGQNFFEYVLEFIRDVSKTQIGEEYGPWVPFIGTMFLFIFVSNWSGALLPWKIIQLPHGELAAPTNDINTTVALALLTSVAYFYAGLSKKGLSYFGKYIQPTPILLPINILEDFTKPLSLSFRLFGNILADELVVVVLVSLVPLVVPIPVMFLGLFTSGIQALIFATLAAAYIGESMEGHH.

Helical transmembrane passes span 38 to 58 (QVLITSWVVIAILLGSAIIAV), 95 to 115 (VPFIGTMFLFIFVSNWSGALL), 134 to 154 (INTTVALALLTSVAYFYAGLS), 199 to 219 (LVVVVLVSLVPLVVPIPVMFL), and 220 to 240 (GLFTSGIQALIFATLAAAYIG).

Belongs to the ATPase A chain family. F-type ATPases have 2 components, CF(1) - the catalytic core - and CF(0) - the membrane proton channel. CF(1) has five subunits: alpha(3), beta(3), gamma(1), delta(1), epsilon(1). CF(0) has four main subunits: a, b, b' and c.

It is found in the plastid. Its subcellular location is the chloroplast thylakoid membrane. Its function is as follows. Key component of the proton channel; it plays a direct role in the translocation of protons across the membrane. The protein is ATP synthase subunit a, chloroplastic of Cucumis sativus (Cucumber).